Reading from the N-terminus, the 214-residue chain is Ion-translocating oxidoreductase complex subunit G (214 aa).

Residues 13–33 (ALLLGLFALVGVGLVALVQQF) traverse the membrane as a helical segment. Threonine 180 is subject to FMN phosphoryl threonine.

This sequence belongs to the RnfG family. As to quaternary structure, the complex is composed of six subunits: RnfA, RnfB, RnfC, RnfD, RnfE and RnfG. The cofactor is FMN.

It localises to the cell inner membrane. Its function is as follows. Part of a membrane-bound complex that couples electron transfer with translocation of ions across the membrane. In Pseudomonas aeruginosa (strain UCBPP-PA14), this protein is Ion-translocating oxidoreductase complex subunit G.